A 164-amino-acid chain; its full sequence is UPF0561 protein C2orf68 homolog (164 aa).

Composition is skewed to basic and acidic residues over residues 1 to 13 (MEVI…ESVK) and 35 to 49 (IARD…QAKE). Residues 1–98 (MEVIRDGEGE…WNESSSGTEM (98 aa)) form a disordered region. Positions 50 to 64 (KQRRRHTNTPRRPRR) are enriched in basic residues.

Belongs to the UPF0561 family.

This is UPF0561 protein C2orf68 homolog from Danio rerio (Zebrafish).